The following is an 898-amino-acid chain: Interleukin enhancer-binding factor 3 (898 aa).

Residues 5–378 form the DZF domain; it reads RIFVNDDRHV…PMKRPMEEDG (374 aa). A disordered region spans residues 52–85; that stretch reads QEKGNSELSEAENMDTPPDDESKEGAGEQKAEHM. Over residues 60–73 the composition is skewed to acidic residues; it reads SEAENMDTPPDDES. T67 carries the phosphothreonine modification. Positions 74–85 are enriched in basic and acidic residues; the sequence is KEGAGEQKAEHM. An N6-acetyllysine modification is found at K100. Phosphothreonine; by PKR is present on T188. S190 carries the phosphoserine modification. K297 is covalently cross-linked (Glycyl lysine isopeptide (Lys-Gly) (interchain with G-Cter in ubiquitin)). A Phosphothreonine; by PKR modification is found at T315. K348 participates in a covalent cross-link: Glycyl lysine isopeptide (Lys-Gly) (interchain with G-Cter in SUMO1). The tract at residues 363-402 is disordered; that stretch reads TTYAITPMKRPMEEDGEEKSPSKKKKKIQKKEEKADPPQA. A Bipartite nuclear localization signal motif is present at residues 371 to 389; sequence KRPMEEDGEEKSPSKKKKK. The span at 372 to 383 shows a compositional bias: basic and acidic residues; sequence RPMEEDGEEKSP. S382 and S384 each carry phosphoserine. K396 participates in a covalent cross-link: Glycyl lysine isopeptide (Lys-Gly) (interchain with G-Cter in SUMO2). The 70-residue stretch at 398–467 folds into the DRBM 1 domain; it reads DPPQAMNALM…AVKVLQDMGL (70 aa). K460 is subject to N6-acetyllysine. Disordered stretches follow at residues 466 to 495 and 505 to 524; these read GLPT…IVAP and PSSV…LTKH. The span at 472 to 481 shows a compositional bias: basic and acidic residues; the sequence is EGRDSSKGED. A phosphoserine mark is found at S476, S477, S482, and S486. A Glycyl lysine isopeptide (Lys-Gly) (interchain with G-Cter in SUMO2) cross-link involves residue K489. Positions 524–590 constitute a DRBM 2 domain; that stretch reads HGKNPVMELN…ALAALEKLFP (67 aa). T592 is subject to Phosphothreonine. Residues 609-898 form an interaction with PRMT1 region; that stretch reads RGGPKFAAKP…TEHSMNYQYR (290 aa). 2 disordered regions span residues 631–661 and 719–898; these read NEVP…GGAN and QGDS…YQYR. Over residues 644-661 the composition is skewed to gly residues; the sequence is RGGNIRGRGRGRGFGGAN. Low complexity-rich tracts occupy residues 745 to 769, 783 to 794, and 802 to 812; these read SYSS…SSYG, GSYSSYSNSYNS, and DYSYDSKFNYS. Phosphoserine is present on residues S794, S812, S814, and S818. Residues 813–822 show a composition bias toward gly residues; it reads GSGGRSGGNS. Over residues 823 to 834 the composition is skewed to low complexity; it reads YGSSGSSSYNTG. A compositionally biased stretch (gly residues) spans 835-845; that stretch reads SHGGYGTGSGG. Over residues 846–886 the composition is skewed to low complexity; the sequence is SSSYQGKQGGYSSQSNYSSPGSSQSYSGPASSYQSSQGGYS.

Identified in a IGF2BP1-dependent mRNP granule complex containing untranslated mRNAs. Interacts with FUS and SMN. Interacts (via C-terminus) with PRMT1. Forms a complex with ILF2. Can also bind to PRKDC/XRCC7: this may stabilize the interaction of PRKDC/XRCC7 and the heterodimeric complex of XRCC6/KU70 and XRCC5/KU80. Forms a heteromeric complex with ZNF346 and ILF3. Found in a nuclear export complex with XPO5, ILF3, Ran and double-stranded RNA or double-stranded minihelix VA1 RNA. Found in a nuclear export complex with XPO5, RAN, ILF3, ZNF346 and double-stranded RNA. Interacts with XPO5 and ZNF346. Forms a complex with ILF2, YLPM1, KHDRBS1, RBMX, NCOA5 and PPP1CA. Interacts with AGO1 and AGO2. Interacts with DHX36; this interaction occurs in a RNA-dependent manner. Interacts with ELAVL1; this interaction occurs in a RNA-dependent manner. Interacts with HAVCR2; this interaction promotes ILF3 ubiquitination and subsequent degradation. Phosphorylated at Thr-188 and Thr-315 by PKR in response to RNA viruses. This phosphorylation results in the dissociation of ILF2 from the ILF2-ILF3 complex resulting in a cytoplasmic sequestration of ILF3 where it can bind to viral RNAs and impede viral replication. Post-translationally, methylated by protein arginine N-methyltransferase 1. Ubiquitous. Expressed at high levels in the thymus, testis, ovary and at lower levelss in the spleen.

Its subcellular location is the nucleus. It is found in the nucleolus. It localises to the cytoplasm. Its function is as follows. RNA-binding protein that plays an essential role in the biogenesis of circular RNAs (circRNAs) which are produced by back-splicing circularization of pre-mRNAs. Within the nucleus, promotes circRNAs processing by stabilizing the regulatory elements residing in the flanking introns of the circularized exons. Plays thereby a role in the back-splicing of a subset of circRNAs. As a consequence, participates in a wide range of transcriptional and post-transcriptional processes. Binds to poly-U elements and AU-rich elements (AREs) in the 3'-UTR of target mRNAs. Upon viral infection, ILF3 accumulates in the cytoplasm and participates in the innate antiviral response. Mechanistically, ILF3 becomes phosphorylated and activated by the double-stranded RNA-activated protein kinase/PKR which releases ILF3 from cellular mature circRNAs. In turn, unbound ILF3 molecules are able to interact with and thus inhibit viral mRNAs. The polypeptide is Interleukin enhancer-binding factor 3 (Ilf3) (Mus musculus (Mouse)).